A 601-amino-acid polypeptide reads, in one-letter code: Sulfite reductase [NADPH] flavoprotein alpha-component (601 aa).

In terms of domain architecture, Flavodoxin-like spans 65 to 203 (ITIISASQTG…NYNKWSQDLL (139 aa)). Residues 71 to 76 (SQTGNA), 118 to 121 (STQG), and 154 to 163 (LGDTSYNLFC) contribute to the FMN site. One can recognise an FAD-binding FR-type domain in the interval 236–450 (KNPAEGIILT…IQTNDNFRLP (215 aa)). FAD contacts are provided by residues threonine 324, isoleucine 358, 388-391 (RLYS), 406-408 (TVG), and 421-424 (GGAS). Residues 521–522 (SQ), 527–531 (KIYVQ), and aspartate 563 each bind NADP(+). Tyrosine 601 is a binding site for FAD.

Belongs to the NADPH-dependent sulphite reductase flavoprotein subunit CysJ family. It in the N-terminal section; belongs to the flavodoxin family. This sequence in the C-terminal section; belongs to the flavoprotein pyridine nucleotide cytochrome reductase family. Alpha(8)-beta(8). The alpha component is a flavoprotein, the beta component is a hemoprotein. The cofactor is FAD. Requires FMN as cofactor.

It catalyses the reaction hydrogen sulfide + 3 NADP(+) + 3 H2O = sulfite + 3 NADPH + 4 H(+). It participates in sulfur metabolism; hydrogen sulfide biosynthesis; hydrogen sulfide from sulfite (NADPH route): step 1/1. Component of the sulfite reductase complex that catalyzes the 6-electron reduction of sulfite to sulfide. This is one of several activities required for the biosynthesis of L-cysteine from sulfate. The flavoprotein component catalyzes the electron flow from NADPH -&gt; FAD -&gt; FMN to the hemoprotein component. The protein is Sulfite reductase [NADPH] flavoprotein alpha-component of Buchnera aphidicola subsp. Acyrthosiphon pisum (strain APS) (Acyrthosiphon pisum symbiotic bacterium).